A 486-amino-acid polypeptide reads, in one-letter code: Probable transporter MCH1 (486 aa).

The next 12 helical transmembrane spans lie at isoleucine 31–tyrosine 51, serine 68–glycine 88, tyrosine 95–phenylalanine 115, glutamate 135–leucine 155, threonine 174–tryptophan 194, valine 211–phenylalanine 231, phenylalanine 268–phenylalanine 288, phenylalanine 312–serine 333, valine 349–phenylalanine 369, valine 377–valine 397, isoleucine 409–alanine 429, and phenylalanine 457–phenylalanine 477.

This sequence belongs to the major facilitator superfamily.

Its subcellular location is the vacuole membrane. Functionally, probable transporter. This chain is Probable transporter MCH1 (MCH1), found in Yarrowia lipolytica (strain CLIB 122 / E 150) (Yeast).